A 126-amino-acid polypeptide reads, in one-letter code: DNA-directed RNA polymerase 35 kDa subunit (126 aa).

Belongs to the poxviridae DNA-directed RNA polymerase 35 kDa subunit family. The DNA-dependent RNA polymerase used for intermediate and late genes expression consists of eight subunits 147 kDa, 133 kDa, 35 kDa, 30 kDa, 22 kDa, 19 kDa, 18 kDa and 7 kDa totalling more than 500 kDa in mass. The same holoenzyme, with the addition of the transcription-specificity factor RAP94, is used for early gene expression.

The protein resides in the virion. It catalyses the reaction RNA(n) + a ribonucleoside 5'-triphosphate = RNA(n+1) + diphosphate. Functionally, part of the DNA-dependent RNA polymerase which catalyzes the transcription of viral DNA into RNA using the four ribonucleoside triphosphates as substrates. Responsible for the transcription of early, intermediate and late genes. DNA-dependent RNA polymerase associates with the early transcription factor (ETF) thereby allowing the early genes transcription. Late transcription, and probably also intermediate transcription, require newly synthesized RNA polymerase. In Ovis aries (Sheep), this protein is DNA-directed RNA polymerase 35 kDa subunit (RPO35).